Consider the following 344-residue polypeptide: Molybdate/tungstate import ATP-binding protein WtpC (344 aa).

Residues 2 to 231 enclose the ABC transporter domain; that stretch reads LRVESVSKDY…PVDEGVARFL (230 aa). 33 to 40 serves as a coordination point for ATP; that stretch reads GPSGAGKT. Residues 280-344 form the Mop domain; sequence KTSARNEFRA…SFKTSAIKVF (65 aa).

Belongs to the ABC transporter superfamily. Sulfate/tungstate importer (TC 3.A.1.6) family. The complex is composed of two ATP-binding proteins (WtpC), two transmembrane proteins (WtpB) and a solute-binding protein (WtpA).

It is found in the cell membrane. It catalyses the reaction tungstate(in) + ATP + H2O = tungstate(out) + ADP + phosphate + H(+). In terms of biological role, part of the ABC transporter complex WtpABC involved in molybdate/tungstate import. Responsible for energy coupling to the transport system. This Pyrococcus abyssi (strain GE5 / Orsay) protein is Molybdate/tungstate import ATP-binding protein WtpC (wtpC).